The primary structure comprises 276 residues: 2,3,4,5-tetrahydropyridine-2,6-dicarboxylate N-succinyltransferase (276 aa).

2 residues coordinate substrate: R108 and D145.

Belongs to the transferase hexapeptide repeat family. As to quaternary structure, homotrimer.

It localises to the cytoplasm. It carries out the reaction (S)-2,3,4,5-tetrahydrodipicolinate + succinyl-CoA + H2O = (S)-2-succinylamino-6-oxoheptanedioate + CoA. Its pathway is amino-acid biosynthesis; L-lysine biosynthesis via DAP pathway; LL-2,6-diaminopimelate from (S)-tetrahydrodipicolinate (succinylase route): step 1/3. This chain is 2,3,4,5-tetrahydropyridine-2,6-dicarboxylate N-succinyltransferase, found in Caulobacter vibrioides (strain ATCC 19089 / CIP 103742 / CB 15) (Caulobacter crescentus).